The sequence spans 430 residues: Probable aspartic-type endopeptidase ARB_07403 (430 aa).

The signal sequence occupies residues 1-17 (MHVSTLLVAVLLPLALS). A propeptide spans 18–87 (KPTPRKKTGS…SKATAGSGKE (70 aa)) (activation peptide). The tract at residues 66 to 105 (YHPQHISKLPGNSKATAGSGKEGVESQDEKGEVVNNPTNH) is disordered. Residues 87–97 (EGVESQDEKGE) show a composition bias toward basic and acidic residues. The region spanning 109–427 (FLSPVTIGGQ…DQRGPSISLA (319 aa)) is the Peptidase A1 domain. The active site involves aspartate 125. N-linked (GlcNAc...) asparagine glycosylation is present at asparagine 306. Aspartate 314 is a catalytic residue.

It belongs to the peptidase A1 family.

Its subcellular location is the secreted. Functionally, probable secreted aspartic-type endopeptidase which contributes to virulence. This Arthroderma benhamiae (strain ATCC MYA-4681 / CBS 112371) (Trichophyton mentagrophytes) protein is Probable aspartic-type endopeptidase ARB_07403.